We begin with the raw amino-acid sequence, 245 residues long: tRNA pseudouridine synthase A (245 aa).

D52 (nucleophile) is an active-site residue. Y111 is a binding site for substrate.

The protein belongs to the tRNA pseudouridine synthase TruA family. In terms of assembly, homodimer.

It catalyses the reaction uridine(38/39/40) in tRNA = pseudouridine(38/39/40) in tRNA. Formation of pseudouridine at positions 38, 39 and 40 in the anticodon stem and loop of transfer RNAs. In Zymomonas mobilis subsp. mobilis (strain ATCC 31821 / ZM4 / CP4), this protein is tRNA pseudouridine synthase A.